The sequence spans 404 residues: Cysteine desulfurase IscS (404 aa).

Residues 75-76 (AT), Asn-155, Gln-183, and 203-205 (SAH) contribute to the pyridoxal 5'-phosphate site. N6-(pyridoxal phosphate)lysine is present on Lys-206. A pyridoxal 5'-phosphate-binding site is contributed by Thr-243. Cys-328 functions as the Cysteine persulfide intermediate in the catalytic mechanism. Position 328 (Cys-328) interacts with [2Fe-2S] cluster.

This sequence belongs to the class-V pyridoxal-phosphate-dependent aminotransferase family. NifS/IscS subfamily. Homodimer. Forms a heterotetramer with IscU, interacts with other sulfur acceptors. Requires pyridoxal 5'-phosphate as cofactor.

The protein resides in the cytoplasm. It carries out the reaction (sulfur carrier)-H + L-cysteine = (sulfur carrier)-SH + L-alanine. Its pathway is cofactor biosynthesis; iron-sulfur cluster biosynthesis. Master enzyme that delivers sulfur to a number of partners involved in Fe-S cluster assembly, tRNA modification or cofactor biosynthesis. Catalyzes the removal of elemental sulfur atoms from cysteine to produce alanine. Functions as a sulfur delivery protein for Fe-S cluster synthesis onto IscU, an Fe-S scaffold assembly protein, as well as other S acceptor proteins. This is Cysteine desulfurase IscS from Shewanella loihica (strain ATCC BAA-1088 / PV-4).